A 575-amino-acid chain; its full sequence is Sialate:O-sulfotransferase 1 (575 aa).

Residues 1–14 (MAKPFFRLQKFLRR) lie on the Cytoplasmic side of the membrane. A helical; Signal-anchor for type II membrane protein transmembrane segment spans residues 15–35 (TQFLLFFLTAAYLMTGSLLLL). The Extracellular portion of the chain corresponds to 36–575 (QRVRVALPQG…TGLPREYVPR (540 aa)). WSC domains follow at residues 142–234 (RGTY…YRVD) and 245–340 (TATY…DTRC). Residues Asn257 and Asn348 are each glycosylated (N-linked (GlcNAc...) asparagine).

This sequence belongs to the WSCD family.

It localises to the golgi apparatus membrane. It carries out the reaction a ganglioside GM1b + 3'-phosphoadenylyl sulfate = an 8-O-sulfo-ganglioside GM1b + adenosine 3',5'-bisphosphate + H(+). Its function is as follows. Sialate:O-sulfotransferase which catalyzes 8-O-sulfation at the Sia-glycan level using 3'-phosphoadenosine 5'-phosphosulfate (PAPS) as a donor, forming 8-O-sulfated Sia (Sia8S)-glycans. Displays selectivity toward glycolipids such as GM1 gangliosides. This Homo sapiens (Human) protein is Sialate:O-sulfotransferase 1 (WSCD1).